A 483-amino-acid polypeptide reads, in one-letter code: MKHIVKNIHFVGIGGAGMSGIAEVLLNLGYRVTGSDLGQSAATQRLTALGATVMQGHAPEHVVGANAVVVSTAVRGDNPEVLAARAKRIPIVPRAVMLAELMRLKQGIAIAGTHGKTTTTSLVASVLAEGGLDPTFVIGGRLNSAGANARLGTGDFIVAEADESDASFLNLFPVIEVITNIDADHMDTYGHDFARLKQAFIEFTHRLPFYGIAVLCVDDPNVREILPFVSKPVVRYGFAEDAQVRAVNARAVDGRMEFTVIRQLNGHAEPPLSITLNLPGMHNVQNALAAIAIATELEVPDEAIVKALAEFNGVGRRFQRYGEVPTADGQGRFTLIDDYGHHPVEMAATLAAARGAFPGRRLVLAFQPHRFTRTRDCFEDFIKVLGTVDALLLAEVYAAGEPPIVAADGRALTRALRVAGKIEPVFVEQIEDMPQAILDAAQDNDVVITMGAGSIGQVPGQVVARQAEVRAANVVDLNGGAAA.

ATP is bound at residue 112-118 (GTHGKTT).

The protein belongs to the MurCDEF family.

It localises to the cytoplasm. The enzyme catalyses UDP-N-acetyl-alpha-D-muramate + L-alanine + ATP = UDP-N-acetyl-alpha-D-muramoyl-L-alanine + ADP + phosphate + H(+). It participates in cell wall biogenesis; peptidoglycan biosynthesis. Its function is as follows. Cell wall formation. The chain is UDP-N-acetylmuramate--L-alanine ligase from Ralstonia nicotianae (strain ATCC BAA-1114 / GMI1000) (Ralstonia solanacearum).